Here is a 128-residue protein sequence, read N- to C-terminus: Class I hydrophobin 19 (128 aa).

4 disulfides stabilise this stretch: cysteine 48–cysteine 107, cysteine 55–cysteine 101, cysteine 56–cysteine 88, and cysteine 108–cysteine 121. Asparagine 110 carries N-linked (GlcNAc...) asparagine glycosylation.

This sequence belongs to the fungal hydrophobin family. In terms of assembly, self-assembles to form functional amyloid fibrils called rodlets. Self-assembly into fibrillar rodlets occurs spontaneously at hydrophobic:hydrophilic interfaces and the rodlets further associate laterally to form amphipathic monolayers.

The protein resides in the secreted. Its subcellular location is the cell wall. Its function is as follows. Aerial growth, conidiation, and dispersal of filamentous fungi in the environment rely upon a capability of their secreting small amphipathic proteins called hydrophobins (HPBs) with low sequence identity. Class I can self-assemble into an outermost layer of rodlet bundles on aerial cell surfaces, conferring cellular hydrophobicity that supports fungal growth, development and dispersal; whereas Class II form highly ordered films at water-air interfaces through intermolecular interactions but contribute nothing to the rodlet structure. In Pleurotus ostreatus (strain PC15) (Oyster mushroom), this protein is Class I hydrophobin 19.